The following is a 370-amino-acid chain: Phosphate-binding protein PstS2 (370 aa).

Residues 1–22 (MKFARSGAAVSLLAAGTLVLTA) form the signal peptide. Cys-23 carries N-palmitoyl cysteine lipidation. Cys-23 is lipidated: S-diacylglycerol cysteine. Phosphate-binding positions include 54 to 56 (STA), Ser-84, Asp-102, and 191 to 193 (SGT).

It belongs to the PstS family. In terms of assembly, the complex is composed of two ATP-binding proteins (PstB), two transmembrane proteins (PstC and PstA) and a solute-binding protein (PstS).

It is found in the cell membrane. The protein localises to the secreted. Its function is as follows. Functions in inorganic phosphate uptake, a phosphate-binding protein, although probably not the main uptake protein under phosphate starvation. Part of the ABC transporter complex PstSACB involved in phosphate import. In Mycobacterium bovis (strain BCG / Pasteur 1173P2), this protein is Phosphate-binding protein PstS2 (pstS2).